Consider the following 364-residue polypeptide: Aminomethyltransferase (364 aa).

This sequence belongs to the GcvT family. The glycine cleavage system is composed of four proteins: P, T, L and H.

The catalysed reaction is N(6)-[(R)-S(8)-aminomethyldihydrolipoyl]-L-lysyl-[protein] + (6S)-5,6,7,8-tetrahydrofolate = N(6)-[(R)-dihydrolipoyl]-L-lysyl-[protein] + (6R)-5,10-methylene-5,6,7,8-tetrahydrofolate + NH4(+). Its function is as follows. The glycine cleavage system catalyzes the degradation of glycine. This chain is Aminomethyltransferase, found in Enterobacter sp. (strain 638).